The following is a 194-amino-acid chain: Large ribosomal subunit protein bL25 (194 aa).

Belongs to the bacterial ribosomal protein bL25 family. CTC subfamily. Part of the 50S ribosomal subunit; part of the 5S rRNA/L5/L18/L25 subcomplex. Contacts the 5S rRNA. Binds to the 5S rRNA independently of L5 and L18.

Functionally, this is one of the proteins that binds to the 5S RNA in the ribosome where it forms part of the central protuberance. This is Large ribosomal subunit protein bL25 from Geotalea uraniireducens (strain Rf4) (Geobacter uraniireducens).